We begin with the raw amino-acid sequence, 229 residues long: Heptaprenylglyceryl phosphate synthase (229 aa).

K12 lines the sn-glycerol 1-phosphate pocket. Positions 14 and 40 each coordinate Mg(2+). Sn-glycerol 1-phosphate contacts are provided by residues 159 to 164 (YLEYSG), G189, and 209 to 210 (GN).

It belongs to the GGGP/HepGP synthase family. Group I subfamily. In terms of assembly, homodimer. The cofactor is Mg(2+).

The enzyme catalyses sn-glycerol 1-phosphate + all-trans-heptaprenyl diphosphate = 3-heptaprenyl-sn-glycero-1-phosphate + diphosphate. It participates in membrane lipid metabolism; glycerophospholipid metabolism. In terms of biological role, prenyltransferase that catalyzes in vivo the transfer of the heptaprenyl moiety of heptaprenyl pyrophosphate (HepPP; 35 carbon atoms) to the C3 hydroxyl of sn-glycerol-1-phosphate (G1P), producing heptaprenylglyceryl phosphate (HepGP). This reaction is an ether-bond-formation step in the biosynthesis of archaea-type G1P-based membrane lipids found in Bacillales. The chain is Heptaprenylglyceryl phosphate synthase from Bacillus cytotoxicus (strain DSM 22905 / CIP 110041 / 391-98 / NVH 391-98).